Reading from the N-terminus, the 113-residue chain is Hydrogenase maturation factor HybF (113 aa).

The Ni(2+) site is built by H2 and E3. Residues C73, C76, C89, and C92 each coordinate Zn(2+).

It belongs to the HypA/HybF family. HybF subfamily. Monomer.

Functionally, involved in the maturation of [NiFe] hydrogenases. Required for nickel insertion into the metal center of the hydrogenase. HybF is involved in maturation of hydrogenases 1 and 2. It may partially substitute for the function of HypA and vice versa. In Escherichia coli (strain K12), this protein is Hydrogenase maturation factor HybF.